Consider the following 99-residue polypeptide: DNA-directed RNA polymerase subunit omega (99 aa).

The tract at residues 55–99 is disordered; it reads EAGTVISDPNPEEKRERLRIEREERKRQREQEQKELENRLRDEKN. Positions 65-99 are enriched in basic and acidic residues; that stretch reads PEEKRERLRIEREERKRQREQEQKELENRLRDEKN.

It belongs to the RNA polymerase subunit omega family. The RNAP catalytic core consists of 2 alpha, 1 beta, 1 beta' and 1 omega subunit. When a sigma factor is associated with the core the holoenzyme is formed, which can initiate transcription.

The enzyme catalyses RNA(n) + a ribonucleoside 5'-triphosphate = RNA(n+1) + diphosphate. In terms of biological role, promotes RNA polymerase assembly. Latches the N- and C-terminal regions of the beta' subunit thereby facilitating its interaction with the beta and alpha subunits. This Enterococcus faecalis (strain ATCC 700802 / V583) protein is DNA-directed RNA polymerase subunit omega.